Here is a 318-residue protein sequence, read N- to C-terminus: Isoflavone reductase (318 aa).

NADP(+)-binding positions include 11–17 (GPTGAIG), Arg-36, and Lys-44. The active-site Proton acceptor is Lys-144. Residue Arg-148 coordinates NADP(+).

This sequence belongs to the NmrA-type oxidoreductase family. Isoflavone reductase subfamily.

The enzyme catalyses (3R)-vestitone + NADP(+) = 2'-hydroxyformononetin + NADPH + 2 H(+). It participates in phytoalexin biosynthesis; pterocarpan phytoalexin biosynthesis. Functionally, reduces achiral isoflavones to chiral isoflavanones during the biosynthesis of chiral pterocarpan phytoalexins. The chain is Isoflavone reductase (IFR) from Cicer arietinum (Chickpea).